Here is a 132-residue protein sequence, read N- to C-terminus: Small ribosomal subunit protein uS8 (132 aa).

This sequence belongs to the universal ribosomal protein uS8 family. Part of the 30S ribosomal subunit. Contacts proteins S5 and S12.

Its function is as follows. One of the primary rRNA binding proteins, it binds directly to 16S rRNA central domain where it helps coordinate assembly of the platform of the 30S subunit. The chain is Small ribosomal subunit protein uS8 from Kineococcus radiotolerans (strain ATCC BAA-149 / DSM 14245 / SRS30216).